Reading from the N-terminus, the 305-residue chain is Target of rapamycin complex subunit LST8-1 (305 aa).

7 WD repeats span residues 1–30, 33–71, 76–115, 117–156, 160–199, 209–248, and 251–292; these read MSQP…CYRT, YPDS…PQPV, SHTN…CQKE, ESVA…CSCE, EVDT…QTMT, AHNG…LEKV, and GHQR…KVYQ.

The protein belongs to the WD repeat LST8 family. As to quaternary structure, the target of rapamycin complex 1 (TORC1) is composed of at least RAPTOR, LST8 and TOR. Interacts with TOR. In terms of tissue distribution, expressed in the root central cylinder, root tips, emerging lateral roots, vasculature of cotyledons, leaf stomata, leaf stipules, anthers, pollen, filaments, and vasculature of petals and sepals.

Its subcellular location is the endosome. Functionally, component of TORC1 complex, which is an essential cell growth regulator that controls plant development. Acts by activating transcription, protein synthesis and ribosome biogenesis, and inhibiting mRNA degradation and autophagy. Involved in regulating amino acid accumulation and the synthesis of myo-inositol and raffinose during plant adaptation to long days. Involved in the regulation of plant growth and abscisic acid (ABA) accumulation. Acts as a positive regulation of the ABA biosynthetic genes ZEP, NCED3 and AAO3, and negative regulator of the ABA catabolic genes CYP707A2 and CYP707A3. The protein is Target of rapamycin complex subunit LST8-1 of Arabidopsis thaliana (Mouse-ear cress).